The primary structure comprises 1259 residues: Lysine-specific demethylase 2B (1259 aa).

The region spanning 147-315 (FSHTKLERVV…MQLRVFEIED (169 aa)) is the JmjC domain. Threonine 208 is a substrate binding site. Histidine 211 and aspartate 213 together coordinate Fe cation. Substrate is bound at residue lysine 228. Histidine 283 is a binding site for Fe cation. The span at 388–402 (EEKGNLVEKPSKQSG) shows a compositional bias: basic and acidic residues. Disordered stretches follow at residues 388–463 (EEKG…ATDM) and 536–562 (KPSK…SANR). Residues 403 to 413 (DESSTTNSTHS) show a composition bias toward polar residues. The segment covering 414 to 423 (NGKDAAEKKQ) has biased composition (basic and acidic residues). The segment covering 426 to 437 (TLMQQLKRTLSN) has biased composition (polar residues). Basic residues predominate over residues 536-548 (KPSKNRAVGRPKG). A CXXC-type zinc finger spans residues 567–613 (ARRRRTRCRKCEACLRTECGECHFCKDMKKFGGPGRMKQSCIMRQCI). The Zn(2+) site is built by cysteine 574, cysteine 577, cysteine 580, cysteine 585, cysteine 588, cysteine 591, cysteine 607, cysteine 612, cysteine 623, cysteine 626, cysteine 649, cysteine 652, histidine 657, cysteine 660, cysteine 680, and cysteine 683. Residues 620–686 (TAVCLVCGEA…CWECPKCNHA (67 aa)) form a PHD-type zinc finger. 2 stretches are compositionally biased toward basic and acidic residues: residues 729 to 763 (KKKV…EDGH) and 771 to 790 (EKPP…EEKL). The segment at 729 to 958 (KKKVEREETP…PPPSLSPPKC (230 aa)) is disordered. Polar residues predominate over residues 835–848 (SRSSSPTAGPSTEG). Residues 854 to 863 (KKKIRRKRRV) show a composition bias toward basic residues. A compositionally biased stretch (basic and acidic residues) spans 864–877 (SNKELSKELSKELN). The stretch at 864-891 (SNKELSKELSKELNQEIQKTESSLASEN) forms a coiled coil. A compositionally biased stretch (polar residues) spans 878–889 (QEIQKTESSLAS). Residues 890–908 (ENHHPIKSEPESDNEESKK) show a composition bias toward basic and acidic residues. The F-box domain maps to 985 to 1030 (AHVMQREVWMAIFSYLSHRDLCICMRICRTWNRWCCDKRLWTQIDL). LRR repeat units lie at residues 1056–1081 (WTNI…NLSG), 1082–1105 (CSWI…NVQW), 1145–1170 (GLDI…DLSY), 1171–1200 (CNHV…NLSD), and 1201–1225 (CNNV…DLRF).

Belongs to the JHDM1 histone demethylase family. It depends on Fe(2+) as a cofactor.

It localises to the nucleus. The protein localises to the nucleolus. Its subcellular location is the chromosome. The enzyme catalyses N(6),N(6)-dimethyl-L-lysyl(36)-[histone H3] + 2 2-oxoglutarate + 2 O2 = L-lysyl(36)-[histone H3] + 2 formaldehyde + 2 succinate + 2 CO2. Its activity is regulated as follows. Histone demethylase activity is inhibited by fumarate. Functionally, histone demethylase that demethylates 'Lys-4' and 'Lys-36' of histone H3, thereby playing a central role in histone code. Preferentially demethylates trimethylated H3 'Lys-4' and dimethylated H3 'Lys-36' residue while it has weak or no activity for mono- and tri-methylated H3 'Lys-36'. Preferentially binds the transcribed region of ribosomal RNA and represses the transcription of ribosomal RNA genes which inhibits cell growth and proliferation. The protein is Lysine-specific demethylase 2B (kdm2b) of Xenopus laevis (African clawed frog).